A 91-amino-acid polypeptide reads, in one-letter code: UPF0358 protein SAB0977 (91 aa).

The protein belongs to the UPF0358 family.

The sequence is that of UPF0358 protein SAB0977 from Staphylococcus aureus (strain bovine RF122 / ET3-1).